Reading from the N-terminus, the 350-residue chain is MTAVETVLGSITPNLLGRTLTHEHVALDFEHFYRPPPADFESELKAKISMSTLGYVRLYPYSSKENVRFYDEEALEAAKKDVLLYKKHGGGSIVENSSYGLKRNLEFIVELAKSTGVHFIAGTGHYIHAVQDASHASLTVEQMSDLYTKDILTGIEIKGKMVKCGFIGEVASVYPIHEFEKNSIKATGEIQEVLGCGVSFHPHRDAQAPFDIMRLYLEAGGRAQKCVMSHLDRTLFKIEELVELSELGCYLQYDLFGTECSYYQLNTNVDMISDGQRIENLMKLIEEGLLDRLLMSHDIHTKHRLTSYGGHGYHHIHTNILPRMFARGVTLEQVEQMTVTNPANWLSFDP.

His-22, His-24, Glu-169, His-201, His-230, and Asp-298 together coordinate a divalent metal cation.

It belongs to the metallo-dependent hydrolases superfamily. Phosphotriesterase family. A divalent metal cation is required as a cofactor.

In Drosophila pseudoobscura pseudoobscura (Fruit fly), this protein is Phosphotriesterase-related protein.